We begin with the raw amino-acid sequence, 362 residues long: Large ribosomal subunit protein uL2m (362 aa).

A mitochondrion-targeting transit peptide spans 1-23; it reads MLSYNRFRGYLIPQIHALKLFRY. A disordered region spans residues 306-362; the sequence is AMNPCDHPHGGGGGKSIGNKPSQSPWGVLAKGGYKTRRGKNVNKLLVRDRPRGKEKR. Over residues 351 to 362 the composition is skewed to basic and acidic residues; sequence LVRDRPRGKEKR.

Belongs to the universal ribosomal protein uL2 family. Component of the mitochondrial large ribosomal subunit (mt-LSU). Mature yeast 74S mitochondrial ribosomes consist of a small (37S) and a large (54S) subunit. The 37S small subunit contains a 15S ribosomal RNA (15S mt-rRNA) and at least 32 different proteins. The 54S large subunit contains a 21S rRNA (21S mt-rRNA) and at least 45 different proteins. uL2m has a Na/K ligand binding site.

Its subcellular location is the mitochondrion. Its function is as follows. Component of the mitochondrial ribosome (mitoribosome), a dedicated translation machinery responsible for the synthesis of mitochondrial genome-encoded proteins, including at least some of the essential transmembrane subunits of the mitochondrial respiratory chain. The mitoribosomes are attached to the mitochondrial inner membrane and translation products are cotranslationally integrated into the membrane. The protein is Large ribosomal subunit protein uL2m (rml2) of Schizosaccharomyces pombe (strain 972 / ATCC 24843) (Fission yeast).